The sequence spans 620 residues: LysM domain receptor-like kinase 3 (620 aa).

A signal peptide spans 1-23; that stretch reads MNLKNGLLLFILFLDCVFFKVES. Topologically, residues 24 to 231 are extracellular; sequence KCVKGCDVAL…YSRTGIAKGS (208 aa). 3 cysteine pairs are disulfide-bonded: Cys25–Cys92, Cys29–Cys154, and Cys90–Cys152. Asn46 is a glycosylation site (N-linked (GlcNAc...) asparagine). The LysM 1; degenerate domain maps to 46–72; sequence NISNFMQSKIVLTNSFDVIMSYNRDVV. LysM domains are found at residues 102-148 and 167-210; these read FEYT…KINV and VTYP…VFIP. Residues 108-114 and 136-142 each bind chitin; these read EGDDYDL and DPNHIPV. 2 N-linked (GlcNAc...) asparagine glycosylation sites follow: Asn147 and Asn199. The helical transmembrane segment at 232-252 threads the bilayer; sequence AVGIAMAGIFGLLLFVIYIYA. At 253-620 the chain is on the cytoplasmic side; the sequence is KYFQKKEEEK…QSLINLLSTR (368 aa). The span at 265 to 278 shows a compositional bias: polar residues; the sequence is LPQTSRAFSTQDAS. The disordered stretch occupies residues 265 to 292; sequence LPQTSRAFSTQDASGSAEYETSGSSGHA. Ser269 and Ser273 each carry phosphoserine. In terms of domain architecture, Protein kinase spans 322-595; that stretch reads FSLDNKIGQG…RSIVVALMTL (274 aa). ATP is bound by residues 328–336 and Lys349; that span reads IGQGGFGAV. Catalysis depends on Asp441, which acts as the Proton acceptor.

This sequence belongs to the protein kinase superfamily. Ser/Thr protein kinase family. Forms homodimers and homooligomers. Forms heteromeric complexes with NFP at the cell periphery in nodules. Interacts with PUB1. Post-translationally, autophosphorylated. As to expression, expressed in the epidermal and root hair cells of the developing root hair zone during nonsymbiotic growth. Accumulates in roots and nodules during symbiotic growth with rhizobia. Localized at the cell periphery in a narrow zone of about two cell layers (e.g. L1/L2 zone) at the nodule apex upon infection by rhizobia, from the meristem to the infection zone (at protein level).

The protein resides in the cell membrane. The protein localises to the vacuole lumen. It catalyses the reaction L-seryl-[protein] + ATP = O-phospho-L-seryl-[protein] + ADP + H(+). The catalysed reaction is L-threonyl-[protein] + ATP = O-phospho-L-threonyl-[protein] + ADP + H(+). Its function is as follows. Putative receptor for S.meliloti Nod factor signals essential for the establishment of the nitrogen-fixing, root nodule symbiosis with S.meliloti. Involved in the control of root hair curling after S.meliloti infection, probably by modulating the reorganization of the microtubular cytoskeleton in epidermal and cortical cells. Regulates a subset of Nod factor-induced genes. In Medicago truncatula (Barrel medic), this protein is LysM domain receptor-like kinase 3.